Consider the following 166-residue polypeptide: Large ribosomal subunit protein uL10 (166 aa).

Belongs to the universal ribosomal protein uL10 family. In terms of assembly, part of the ribosomal stalk of the 50S ribosomal subunit. The N-terminus interacts with L11 and the large rRNA to form the base of the stalk. The C-terminus forms an elongated spine to which L12 dimers bind in a sequential fashion forming a multimeric L10(L12)X complex.

In terms of biological role, forms part of the ribosomal stalk, playing a central role in the interaction of the ribosome with GTP-bound translation factors. In Pseudomonas syringae pv. syringae (strain B728a), this protein is Large ribosomal subunit protein uL10.